Here is a 163-residue protein sequence, read N- to C-terminus: Nucleotide-binding protein CKO_02735 (163 aa).

This sequence belongs to the YajQ family.

Functionally, nucleotide-binding protein. The polypeptide is Nucleotide-binding protein CKO_02735 (Citrobacter koseri (strain ATCC BAA-895 / CDC 4225-83 / SGSC4696)).